Reading from the N-terminus, the 628-residue chain is MVAFSTISGLGALSLLFSIIESVDGVSLKVSTDGGNSSSPLLYGFMFEDINHSGDGGIYGQMIQNNGLQGSSPNLTAWASVGDGTISVDTTNPLTAAIPNSLKLDIKPDATGAVGFTNEGYWGIPVDGTEFQNSFWMKGDFSGEITVRLVGNETGTEYGSTTFNQSSSSDDYTKVSVKFPTTKAPDGNVLYELTVDGESAQGSSLSFTLFELFAQTYKSRSNGLKPQLADALESVKGSFLRFPGGNNLEGNDVETRWKWNETIGPLENRPGHQGTWGYFNTDGLGLDEYLYWCEDMNLTPVLGVWAGFALESGGNTPITGDALTPYIEDVLNELEYVLGDPSTTYGKLRASYGREEPWNVTLVEIGNEDNLGGGCESYAERFTAFYNAIHDAYPDLTLIASTDNASCLPSPLPEGAWVDYHNYNTPDELVKQFGMFDNVDRSVPYFIGEYSRWEIPWPNMQGSVAEAVFMIGLERNSDVVKMAAYAPLLQLVNSTQWTPDLISFTQNPNMVIDSTSYYVQQMFSVNRGDTIKEVTSDSAFGPVYWVASSSGSSYYVKLANYGADTQEVSVSIPGMSSGKLTVLADSDPEAYNSDTQTLVTPSESNVQASNGQFSFTLPAWSVAVLTAN.

Positions 1 to 25 (MVAFSTISGLGALSLLFSIIESVDG) are cleaved as a signal peptide. Residues N36, N51, N74, N152, N164, N260, N359, N404, and N493 are each glycosylated (N-linked (GlcNAc...) asparagine).

This sequence belongs to the glycosyl hydrolase 51 family.

The protein localises to the secreted. The catalysed reaction is Hydrolysis of terminal non-reducing alpha-L-arabinofuranoside residues in alpha-L-arabinosides.. Its pathway is glycan metabolism; L-arabinan degradation. Functionally, alpha-L-arabinofuranosidase involved in the degradation of arabinoxylan, a major component of plant hemicellulose. Acts only on small linear 1,5-alpha-linked L-arabinofuranosyl oligosaccharides. In Aspergillus terreus (strain NIH 2624 / FGSC A1156), this protein is Probable alpha-L-arabinofuranosidase A (abfA).